The chain runs to 179 residues: Signal peptidase complex subunit 3 (179 aa).

Over Met-1 to Val-12 the chain is Cytoplasmic. The helical; Signal-anchor for type II membrane protein transmembrane segment at Ala-13 to Leu-33 threads the bilayer. Topologically, residues Asp-34–Ile-179 are lumenal. Asn-73 and Asn-141 each carry an N-linked (GlcNAc...) asparagine glycan.

This sequence belongs to the SPCS3 family. In terms of assembly, component of the signal peptidase complex (SPC) composed of a catalytic subunit twr/SEC11 and three accessory subunits Spase12/SPCS1, Spase25/SPCS2 and Spase22-23/SPCS3. The complex induces a local thinning of the ER membrane which is used to measure the length of the signal peptide (SP) h-region of protein substrates. This ensures the selectivity of the complex towards h-regions shorter than 18-20 amino acids.

Its subcellular location is the endoplasmic reticulum membrane. In terms of biological role, essential component of the signal peptidase complex (SPC) which catalyzes the cleavage of N-terminal signal sequences from nascent proteins as they are translocated into the lumen of the endoplasmic reticulum. Essential for the SPC catalytic activity, possibly by stabilizing and positioning the active center of the complex close to the lumenal surface. Functionally, (Microbial infection) Plays an important role in infection by flaviviruses such as West Nile virus and Dengue virus type 2. In Drosophila melanogaster (Fruit fly), this protein is Signal peptidase complex subunit 3 (Spase22-23).